Consider the following 437-residue polypeptide: Adenosylhomocysteinase (437 aa).

Positions 54, 125, and 170 each coordinate substrate. Residue 171-173 (TTT) coordinates NAD(+). Lysine 200 and aspartate 204 together coordinate substrate. Residues asparagine 205, 234-239 (GYGWVG), glutamate 258, asparagine 293, 314-316 (AGH), and asparagine 361 contribute to the NAD(+) site.

The protein belongs to the adenosylhomocysteinase family. NAD(+) is required as a cofactor.

The protein resides in the cytoplasm. It catalyses the reaction S-adenosyl-L-homocysteine + H2O = L-homocysteine + adenosine. The protein operates within amino-acid biosynthesis; L-homocysteine biosynthesis; L-homocysteine from S-adenosyl-L-homocysteine: step 1/1. May play a key role in the regulation of the intracellular concentration of adenosylhomocysteine. The chain is Adenosylhomocysteinase from Pyrobaculum aerophilum (strain ATCC 51768 / DSM 7523 / JCM 9630 / CIP 104966 / NBRC 100827 / IM2).